Here is a 329-residue protein sequence, read N- to C-terminus: UPF0421 protein SH1063 (329 aa).

The next 5 membrane-spanning stretches (helical) occupy residues 25-45 (LFCLMLDLTPIFAILTAIVTI), 60-80 (LPATVIGALFAVLFTFIFGDP), 87-107 (FSALFTILVCTKLNLQVGTTV), 108-128 (AVLTSVAMIPGIHDAYLFNFF), and 131-151 (LLTALIGLVTAGLVNFIVLPP).

Belongs to the UPF0421 family.

The protein localises to the cell membrane. This chain is UPF0421 protein SH1063, found in Staphylococcus haemolyticus (strain JCSC1435).